The sequence spans 221 residues: 7-cyano-7-deazaguanine synthase (221 aa).

ATP is bound at residue L7–L17. The Zn(2+) site is built by C192, C200, C203, and C206.

It belongs to the QueC family. Homodimer. Requires Zn(2+) as cofactor.

It catalyses the reaction 7-carboxy-7-deazaguanine + NH4(+) + ATP = 7-cyano-7-deazaguanine + ADP + phosphate + H2O + H(+). It participates in purine metabolism; 7-cyano-7-deazaguanine biosynthesis. Its function is as follows. Catalyzes the ATP-dependent conversion of 7-carboxy-7-deazaguanine (CDG) to 7-cyano-7-deazaguanine (preQ(0)). The chain is 7-cyano-7-deazaguanine synthase from Pelotomaculum thermopropionicum (strain DSM 13744 / JCM 10971 / SI).